The primary structure comprises 505 residues: Activin receptor type-1B (505 aa).

The first 23 residues, 1 to 23, serve as a signal peptide directing secretion; it reads MAESAGASSFFPLVVLLLAGSGG. Over 24–126 the chain is Extracellular; sequence SGPRGIQALL…EHPSMWGPVE (103 aa). The N-linked (GlcNAc...) asparagine glycan is linked to Asn43. A helical transmembrane segment spans residues 127-149; it reads LVGIIAGPVFLLFLIIIIVFLVI. The Cytoplasmic portion of the chain corresponds to 150-505; that stretch reads NYHQRVYHNR…QLSVQEDVKI (356 aa). The region spanning 177-206 is the GS domain; the sequence is KTLQDLVYDLSTSGSGSGLPLFVQRTVART. Positions 207 to 497 constitute a Protein kinase domain; the sequence is IVLQEIIGKG…LRIKKTLSQL (291 aa). Residues 213-221 and Lys234 contribute to the ATP site; that span reads IGKGRFGEV. Asp335 serves as the catalytic Proton acceptor. Phosphotyrosine is present on Tyr380.

This sequence belongs to the protein kinase superfamily. TKL Ser/Thr protein kinase family. TGFB receptor subfamily. As to quaternary structure, forms an activin receptor complex with activin receptor type-2 (ACVR2A or ACVR2B). Part of a complex consisting of MAGI2/ARIP1, ACVR2A, ACVR1B and SMAD3. Interacts with SMAD2 and SMAD3. Interacts with SMAD7. Interacts with FKBP1A. Interacts with IGSF1. Interacts with CRIPTO. Interacts with TDP2. Interacts with TSC22D1/TSC-22. Mg(2+) serves as cofactor. The cofactor is Mn(2+). Autophosphorylated. Phosphorylated by activin receptor type-2 (ACVR2A or ACVR2B) in response to activin-binding at serine and threonine residues in the GS domain. Phosphorylation of ACVR1B by activin receptor type-2 regulates association with SMAD7. Post-translationally, ubiquitinated. Level of ubiquitination is regulated by the SMAD7-SMURF1 complex. In terms of processing, ubiquitinated. Urogenital ridge, testis, ovary, brain and lungs.

It localises to the cell membrane. It carries out the reaction L-threonyl-[receptor-protein] + ATP = O-phospho-L-threonyl-[receptor-protein] + ADP + H(+). The enzyme catalyses L-seryl-[receptor-protein] + ATP = O-phospho-L-seryl-[receptor-protein] + ADP + H(+). Activin receptor type-2 (ACVR2A or ACVR2B) activates the type-1 receptor through phosphorylation of its regulatory GS domain. Functionally, transmembrane serine/threonine kinase activin type-1 receptor forming an activin receptor complex with activin receptor type-2 (ACVR2A or ACVR2B). Transduces the activin signal from the cell surface to the cytoplasm and is thus regulating a many physiological and pathological processes including neuronal differentiation and neuronal survival, hair follicle development and cycling, FSH production by the pituitary gland, wound healing, extracellular matrix production, immunosuppression and carcinogenesis. Activin is also thought to have a paracrine or autocrine role in follicular development in the ovary. Within the receptor complex, type-2 receptors (ACVR2A and/or ACVR2B) act as a primary activin receptors whereas the type-1 receptors like ACVR1B act as downstream transducers of activin signals. Activin binds to type-2 receptor at the plasma membrane and activates its serine-threonine kinase. The activated receptor type-2 then phosphorylates and activates the type-1 receptor such as ACVR1B. Once activated, the type-1 receptor binds and phosphorylates the SMAD proteins SMAD2 and SMAD3, on serine residues of the C-terminal tail. Soon after their association with the activin receptor and subsequent phosphorylation, SMAD2 and SMAD3 are released into the cytoplasm where they interact with the common partner SMAD4. This SMAD complex translocates into the nucleus where it mediates activin-induced transcription. Inhibitory SMAD7, which is recruited to ACVR1B through FKBP1A, can prevent the association of SMAD2 and SMAD3 with the activin receptor complex, thereby blocking the activin signal. Activin signal transduction is also antagonized by the binding to the receptor of inhibin-B via the IGSF1 inhibin coreceptor. ACVR1B also phosphorylates TDP2. In Rattus norvegicus (Rat), this protein is Activin receptor type-1B (Acvr1b).